Reading from the N-terminus, the 74-residue chain is Translation initiation factor IF-1 (74 aa).

Positions 1–72 constitute an S1-like domain; that stretch reads MADTEKLKML…TRGRITYRHR (72 aa).

The protein belongs to the IF-1 family. In terms of assembly, component of the 30S ribosomal translation pre-initiation complex which assembles on the 30S ribosome in the order IF-2 and IF-3, IF-1 and N-formylmethionyl-tRNA(fMet); mRNA recruitment can occur at any time during PIC assembly.

It localises to the cytoplasm. One of the essential components for the initiation of protein synthesis. Stabilizes the binding of IF-2 and IF-3 on the 30S subunit to which N-formylmethionyl-tRNA(fMet) subsequently binds. Helps modulate mRNA selection, yielding the 30S pre-initiation complex (PIC). Upon addition of the 50S ribosomal subunit IF-1, IF-2 and IF-3 are released leaving the mature 70S translation initiation complex. This chain is Translation initiation factor IF-1, found in Ureaplasma parvum serovar 3 (strain ATCC 700970).